A 295-amino-acid chain; its full sequence is GTPase Era (295 aa).

Residues 4–171 (KSGFVTIIGR…IKQIVSFLPE (168 aa)) enclose the Era-type G domain. A G1 region spans residues 12–19 (GRPNVGKS). 12-19 (GRPNVGKS) lines the GTP pocket. Residues 38–42 (QTTRN) are G2. Residues 59-62 (DTPG) form a G3 region. GTP-binding positions include 59–63 (DTPGI) and 121–124 (NKID). The interval 121 to 124 (NKID) is G4. Residues 150-152 (ISA) are G5. In terms of domain architecture, KH type-2 spans 202 to 280 (LDQEIPHGIA…FLELWVKVNE (79 aa)).

The protein belongs to the TRAFAC class TrmE-Era-EngA-EngB-Septin-like GTPase superfamily. Era GTPase family. As to quaternary structure, monomer.

The protein localises to the cytoplasm. It localises to the cell membrane. In terms of biological role, an essential GTPase that binds both GDP and GTP, with rapid nucleotide exchange. Plays a role in 16S rRNA processing and 30S ribosomal subunit biogenesis and possibly also in cell cycle regulation and energy metabolism. This chain is GTPase Era, found in Alkaliphilus metalliredigens (strain QYMF).